Here is a 225-residue protein sequence, read N- to C-terminus: MLSGQTVVSIQPVVGSPLDKTEFIVAMAVAAEQAGAKALRIEGVENVRHVSQATNVPIIGIVKRDLQDSPVRITPFVCDVDALATAGATIIAFDATDRQRPESRETIANAIKNSGCFAMADCSCFADGQWAAQIGVDIIGSTLSGYVGEIEPTEPDLELVKQFSSAGFFTMAEGRYNTPQLAAKAIENGAVAVTVGSAITRMEVVTHWFNSATQAVRQNNESISY.

Belongs to the NanE family.

The enzyme catalyses an N-acyl-D-glucosamine 6-phosphate = an N-acyl-D-mannosamine 6-phosphate. It participates in amino-sugar metabolism; N-acetylneuraminate degradation; D-fructose 6-phosphate from N-acetylneuraminate: step 3/5. Its function is as follows. Converts N-acetylmannosamine-6-phosphate (ManNAc-6-P) to N-acetylglucosamine-6-phosphate (GlcNAc-6-P). The sequence is that of Putative N-acetylmannosamine-6-phosphate 2-epimerase from Vibrio vulnificus (strain CMCP6).